A 300-amino-acid chain; its full sequence is RNA polymerase sigma factor RpoH (300 aa).

The interval 53–122 (LVTSHLRLVA…IQEYILRSWS (70 aa)) is sigma-70 factor domain-2. The Interaction with polymerase core subunit RpoC signature appears at 77–80 (EVVS). Positions 231–282 (AMGVLNDRERRIFEARRLAEDPVTLEELSSEFDISRERVRQIEVRAFEKVQE) are sigma-70 factor domain-4. A DNA-binding region (H-T-H motif) is located at residues 255–274 (LEELSSEFDISRERVRQIEV).

It belongs to the sigma-70 factor family. RpoH subfamily. In terms of assembly, interacts with the RNA polymerase core enzyme.

The protein localises to the cytoplasm. In terms of biological role, sigma factors are initiation factors that promote the attachment of RNA polymerase to specific initiation sites and are then released. This sigma factor is involved in regulation of expression of heat shock genes. In Rhizobium radiobacter (Agrobacterium tumefaciens), this protein is RNA polymerase sigma factor RpoH.